The following is a 147-amino-acid chain: uncharacterized protein (147 aa).

This is an uncharacterized protein from Caenorhabditis elegans.